We begin with the raw amino-acid sequence, 185 residues long: Shikimate kinase (185 aa).

Position 12-17 (12-17 (GSGKTT)) interacts with ATP. Thr-16 is a binding site for Mg(2+). Substrate is bound by residues Asp-34, Arg-58, and Gly-79. Position 116 (Arg-116) interacts with ATP. Residue Arg-135 coordinates substrate.

It belongs to the shikimate kinase family. As to quaternary structure, monomer. It depends on Mg(2+) as a cofactor.

It localises to the cytoplasm. It carries out the reaction shikimate + ATP = 3-phosphoshikimate + ADP + H(+). It functions in the pathway metabolic intermediate biosynthesis; chorismate biosynthesis; chorismate from D-erythrose 4-phosphate and phosphoenolpyruvate: step 5/7. Catalyzes the specific phosphorylation of the 3-hydroxyl group of shikimic acid using ATP as a cosubstrate. The sequence is that of Shikimate kinase from Corynebacterium jeikeium (strain K411).